Consider the following 119-residue polypeptide: MAKSSFKLEHPLERRQAEAARIREKYPDRIPVIVEKAERSDIPDIDKKKYLVPADLTVGQFVYVVRKRIKLSAEKAIFIFVKNILPPTAAMMSAIYEEHKDEDGFLYMTYSGENTFGSF.

The Phosphatidylethanolamine amidated glycine moiety is linked to residue Gly117. A propeptide spans 118-119 (SF) (removed in mature form).

The protein belongs to the ATG8 family. As to quaternary structure, interacts with ATG4. Interacts with the Phytophtora infestans effector PexRD54. Interacts with JOKA2. In terms of processing, the C-terminal 2 residues are removed by ATG4 to expose Gly-117 at the C-terminus. The C-terminal Gly is then amidated with phosphatidylethanolamine by an activating system similar to that for ubiquitin. The phosphatidylethanolamine amidated glycine is required for autophagosome formation.

The protein localises to the cytoplasmic vesicle. It is found in the autophagosome membrane. The protein resides in the vacuole membrane. Its subcellular location is the cytoplasm. It localises to the cytoskeleton. Ubiquitin-like modifier involved in autophagosomes formation. May mediate the delivery of the autophagosomes to the vacuole via the microtubule cytoskeleton. ATG8CL-mediated selective autophagy contributes to defense against the fungal pathogen Phytophtora infestans. In Solanum tuberosum (Potato), this protein is Autophagy-related protein 8C-like.